The chain runs to 150 residues: Arginine repressor (150 aa).

It belongs to the ArgR family.

It localises to the cytoplasm. The protein operates within amino-acid biosynthesis; L-arginine biosynthesis [regulation]. Its function is as follows. Regulates arginine biosynthesis genes. This chain is Arginine repressor, found in Clostridium botulinum (strain Okra / Type B1).